A 224-amino-acid chain; its full sequence is MITRPIILVILCYAILMIVQSFVPKAVALKRKPDVGGFMVEDQRTHKSHNYMMKRARNDVLGDKENVRPNPYYTEPFDPDTSPEELSALIVDYANMIRNDVILLDNSVETRTRKRGNIQVENQAIPDPPCTCKYKKEIEDLGENSVPRFIETRNCNKTQQPTCRPPYICKESLYSITILKRRETKSQESLEIPNELKYRWVAESHPVSVACLCTRDYQLRYNNN.

The signal sequence occupies residues 1–29 (MITRPIILVILCYAILMIVQSFVPKAVAL). Cystine bridges form between Cys-132–Cys-169, Cys-155–Cys-211, and Cys-163–Cys-213. Asn-156 carries N-linked (GlcNAc...) asparagine glycosylation.

In terms of assembly, homodimer; disulfide-linked. As to expression, PTTH is synthesized by two dorsolateral neurosecretory cells of the Bombyx brain.

Its function is as follows. PTTH is a brain secretory polypeptide of insects which stimulates the prothoracic glands to produce and release ecdysone, the steroid essential to insect development. Functionally, peptides P2K and P6K are presumed to be cleaved post-translationally and may play some unknown physiologically or developmentally important functions. This chain is Prothoracicotropic hormone, found in Bombyx mori (Silk moth).